A 364-amino-acid chain; its full sequence is Aminomethyltransferase (364 aa).

This sequence belongs to the GcvT family. As to quaternary structure, the glycine cleavage system is composed of four proteins: P, T, L and H.

The enzyme catalyses N(6)-[(R)-S(8)-aminomethyldihydrolipoyl]-L-lysyl-[protein] + (6S)-5,6,7,8-tetrahydrofolate = N(6)-[(R)-dihydrolipoyl]-L-lysyl-[protein] + (6R)-5,10-methylene-5,6,7,8-tetrahydrofolate + NH4(+). Its function is as follows. The glycine cleavage system catalyzes the degradation of glycine. This is Aminomethyltransferase from Photorhabdus laumondii subsp. laumondii (strain DSM 15139 / CIP 105565 / TT01) (Photorhabdus luminescens subsp. laumondii).